The sequence spans 425 residues: Fe(2+) transport protein 3, chloroplastic (425 aa).

A helical transmembrane segment spans residues 65 to 85 (FVAIASILLAGAAGVTIPLIG). Topologically, residues 86 to 97 (RNRRFLQTDGNL) are cytoplasmic. A helical transmembrane segment spans residues 98-118 (FVTAKAFAAGVILATGFVHML). Residues 119–137 (AGGTEALKNPCLPDFPWSK) lie on the Lumenal side of the membrane. The chain crosses the membrane as a helical span at residues 138–158 (FPFPGFFAMIAALITLFVDFM). The Cytoplasmic segment spans residues 159–269 (GTQYYERKQE…GLDAVNGARH (111 aa)). The helical transmembrane segment at 270–290 (IVVSQVLELGIVSHSIIIGLS) threads the bilayer. The Lumenal portion of the chain corresponds to 291 to 301 (LGVSQSPCTIR). A helical transmembrane segment spans residues 302–322 (PLIAALSFHQFFEGFALGGCI). The Cytoplasmic segment spans residues 323-333 (SQAQFRNKSAT). Residues 334–354 (IMACFFALTTPIGIGIGTAVA) traverse the membrane as a helical segment. At 355 to 369 (SSFNSHSVGALVTEG) the chain is on the lumenal side. Residues 370–390 (ILDSLSAGILVYMALVDLIAA) traverse the membrane as a helical segment. The Cytoplasmic portion of the chain corresponds to 391-404 (DFLSTKMRCNFRLQ). A helical transmembrane segment spans residues 405–425 (IVSYVMLFLGAGLMSSLAIWA).

This sequence belongs to the ZIP transporter (TC 2.A.5) family.

The protein localises to the plastid. The protein resides in the chloroplast thylakoid membrane. Functionally, may play a role in the transport of iron in the plastids. This chain is Fe(2+) transport protein 3, chloroplastic (IRT3), found in Arabidopsis thaliana (Mouse-ear cress).